The primary structure comprises 427 residues: Heterogeneous nuclear ribonucleoprotein K (427 aa).

Residues 1–34 are disordered; that stretch reads METEQQEETFTNTETNGKRPAEDMEEEQAFKRSR. A compositionally biased stretch (basic and acidic residues) spans 16–34; it reads NGKRPAEDMEEEQAFKRSR. KH domains follow at residues 39-101 and 117-182; these read MVEL…LKKI and DCEL…IKII. 2 repeat units span residues 51-73 and 56-59. Residues 51–385 form a 2 X 22 AA approximate repeats region; the sequence is AGAVIGKGGK…QIRHESGASI (335 aa). Positions 56–371 are 5 X 4 AA repeats of G-X-G-G; the sequence is GKGGKNIKAL…LAGSIIGKGG (316 aa). Residues 209–246 form an RNA-binding RGG-box region; sequence YGGFTMMFDDRRGRPVGFPMRGRGGFDRMPPNRGGRPM. 3 tandem repeats follow at residues 218 to 223, 230 to 233, and 240 to 243. The segment at 218 to 302 is 2 X 6 AA approximate repeats; sequence DRRGRPVGFP…LMSYDRRGRP (85 aa). Residues 221 to 305 form a disordered region; it reads GRPVGFPMRG…YDRRGRPGDR (85 aa). Residues 249–258 show a composition bias toward basic and acidic residues; the sequence is SRRDYDDMSP. 4 consecutive repeat copies span residues 268-271, 297-302, 363-385, and 368-371. Over residues 295-305 the composition is skewed to basic and acidic residues; the sequence is SYDRRGRPGDR. A KH 3 domain is found at 351–415; sequence IITTQVTIPK…DQIQNAQYLL (65 aa).

The protein resides in the cytoplasm. It localises to the nucleus. The protein localises to the nucleoplasm. One of the major pre-mRNA-binding proteins. Binds tenaciously to poly(C) sequences. Likely to play a role in the nuclear metabolism of hnRNAs, particularly for pre-mRNAs that contain cytidine-rich sequences. Can also bind poly(C) single-stranded DNA. May play an important role in p53/TP53 response to DNA damage, acting at the level of both transcription activation and repression. As part of a ribonucleoprotein complex, may negatively regulate the transcription of genes involved in neuronal differentiation. In Gallus gallus (Chicken), this protein is Heterogeneous nuclear ribonucleoprotein K (HNRNPK).